The following is a 369-amino-acid chain: MSASPKKVIVGMSGGVDSSVSAWLLQQQGYQVEGLFMKNWEEDDGEEYCTAAADLADAQAVCDKLGIELHTVNFAAEYWDNVFELFLEEYKAGRTPNPDILCNKEIKFKAFLEFAAEDLGADFIATGHYVRRADVDGKSQLLRGLDGNKDQSYFLYTLGHDQIVQSLFPVGELEKPEVRKIAENLDLITAKKKDSTGICFIGERKFREFLGRYLPAQPGKIITVDGDDVGEHQGLMYHTLGQRKGLGIGGTKEGSEEPWYVVDKDVENNILVVAQGHEHPRLMSVGLIAQQLHWVDREPFTGTLRCTVKTRYRQTDIPCTVTALDEERVEVRFDEPVSAVTPGQSAVFYSGEICLGGGIIEQRLPLAAV.

ATP-binding positions include 11-18 (GMSGGVDS) and Met-37. Residues 97–99 (NPD) form an interaction with target base in tRNA region. Cys-102 acts as the Nucleophile in catalysis. Cysteines 102 and 199 form a disulfide. Gly-127 contributes to the ATP binding site. Positions 149–151 (KDQ) are interaction with tRNA. The Cysteine persulfide intermediate role is filled by Cys-199. The segment at 311 to 312 (RY) is interaction with tRNA.

It belongs to the MnmA/TRMU family. In terms of assembly, interacts with TusE.

The protein resides in the cytoplasm. The enzyme catalyses S-sulfanyl-L-cysteinyl-[protein] + uridine(34) in tRNA + AH2 + ATP = 2-thiouridine(34) in tRNA + L-cysteinyl-[protein] + A + AMP + diphosphate + H(+). Its function is as follows. Catalyzes the 2-thiolation of uridine at the wobble position (U34) of tRNA(Lys), tRNA(Glu) and tRNA(Gln), leading to the formation of s(2)U34, the first step of tRNA-mnm(5)s(2)U34 synthesis. Sulfur is provided by IscS, via a sulfur-relay system. Binds ATP and its substrate tRNAs. This chain is tRNA-specific 2-thiouridylase MnmA, found in Enterobacter sp. (strain 638).